The following is a 59-amino-acid chain: MSEIKIRENESLDNALRRFKRQCAKSGILSEVRKREHYEKPSVKRKKKAEAAKRNKSKF.

The interval 36-59 is disordered; sequence EHYEKPSVKRKKKAEAAKRNKSKF. Basic residues predominate over residues 43–59; that stretch reads VKRKKKAEAAKRNKSKF.

The protein belongs to the bacterial ribosomal protein bS21 family.

The polypeptide is Small ribosomal subunit protein bS21 (Alkaliphilus oremlandii (strain OhILAs) (Clostridium oremlandii (strain OhILAs))).